Reading from the N-terminus, the 168-residue chain is Photosystem I assembly protein Ycf3 (168 aa).

3 TPR repeats span residues 35–68 (AFTYYRDGMSAQSEGNYAEALQNYYEAMRLEMDP), 72–105 (SYILYNIGLIHTSNGEHTKALEYYFRALERNPFL), and 120–153 (GEQAVREGDSEIAEAWFDQAAEYWKQAIALTPGN).

It belongs to the Ycf3 family.

The protein resides in the plastid. It is found in the chloroplast thylakoid membrane. Functionally, essential for the assembly of the photosystem I (PSI) complex. May act as a chaperone-like factor to guide the assembly of the PSI subunits. The polypeptide is Photosystem I assembly protein Ycf3 (Plantago lanceolata (English plantain)).